The sequence spans 227 residues: Endolytic peptidoglycan transglycosylase RlpA (227 aa).

Residues 1–21 (MMNHKFVLLILLIFYCFFLSG) form the signal peptide. Cys-22 is lipidated: N-palmitoyl cysteine. A lipid anchor (S-diacylglycerol cysteine) is attached at Cys-22.

It belongs to the RlpA family.

Its subcellular location is the cell membrane. In terms of biological role, lytic transglycosylase with a strong preference for naked glycan strands that lack stem peptides. In Rickettsia bellii (strain RML369-C), this protein is Endolytic peptidoglycan transglycosylase RlpA.